Here is a 928-residue protein sequence, read N- to C-terminus: Putative replication origin binding protein (928 aa).

The Helicase ATP-binding domain maps to 386-516; the sequence is NIVPPKGHIT…QVLRDILMTA (131 aa). 399-406 serves as a coordination point for ATP; the sequence is ASLGTGKT. The short motif at 484–487 is the DEAD box element; sequence DECD.

It belongs to the herpesviridae oribp family.

Functionally, displays bipolar ssDNA and dsDNA unwinding activities that require the same core catalytic residues for unwinding in either direction, the 3'-5' direction being more robust. This is Putative replication origin binding protein from Escherichia coli (Enterobacteria phage T5).